Reading from the N-terminus, the 396-residue chain is Tryptophan synthase beta chain (396 aa).

Lysine 88 bears the N6-(pyridoxal phosphate)lysine mark.

It belongs to the TrpB family. As to quaternary structure, tetramer of two alpha and two beta chains. Pyridoxal 5'-phosphate is required as a cofactor.

It catalyses the reaction (1S,2R)-1-C-(indol-3-yl)glycerol 3-phosphate + L-serine = D-glyceraldehyde 3-phosphate + L-tryptophan + H2O. It functions in the pathway amino-acid biosynthesis; L-tryptophan biosynthesis; L-tryptophan from chorismate: step 5/5. Its function is as follows. The beta subunit is responsible for the synthesis of L-tryptophan from indole and L-serine. The protein is Tryptophan synthase beta chain of Shewanella putrefaciens (strain CN-32 / ATCC BAA-453).